Reading from the N-terminus, the 191-residue chain is NF-kappa-B inhibitor-interacting Ras-like protein 2 (191 aa).

Residues 1 to 191 form a small GTPase-like region; it reads MGKSCKVVVC…KNKGSGSVDG (191 aa). Residue 11 to 18 coordinates GTP; the sequence is GQAAVGKT. The short motif at 35 to 43 is the Effector region element; it reads MIETQEDIY. Residues 61–65 and 120–123 contribute to the GTP site; these read DTRGL and NKCD. Positions 170 to 191 are disordered; that stretch reads QPQSKSAFPLSRKNKGSGSVDG.

Belongs to the small GTPase superfamily. Ras family. KappaB-Ras subfamily.

It is found in the cytoplasm. Functionally, atypical Ras-like protein that acts as a potent regulator of NF-kappa-B activity by preventing the degradation of NF-kappa-B inhibitor beta (NFKBIB) by most signals, explaining why NFKBIB is more resistant to degradation. This is NF-kappa-B inhibitor-interacting Ras-like protein 2 (NKIRAS2) from Gallus gallus (Chicken).